The chain runs to 25 residues: Histone H4 (25 aa).

The span at 1–14 (MSGRGKGGKGLGKG) shows a compositional bias: gly residues. The interval 1–25 (MSGRGKGGKGLGKGGAKRHRKVLRD) is disordered. N-acetylserine is present on Ser2. 5 positions are modified to N6-acetyllysine: Lys6, Lys9, Lys13, Lys17, and Lys21. Positions 15–25 (GAKRHRKVLRD) are enriched in basic residues. The DNA-binding element occupies 17–21 (KRHRK).

Belongs to the histone H4 family. In terms of assembly, the nucleosome is a histone octamer containing two molecules each of H2A, H2B, H3 and H4 assembled in one H3-H4 heterotetramer and two H2A-H2B heterodimers. The octamer wraps approximately 147 bp of DNA.

Its subcellular location is the nucleus. The protein resides in the chromosome. Functionally, core component of nucleosome. Nucleosomes wrap and compact DNA into chromatin, limiting DNA accessibility to the cellular machineries which require DNA as a template. Histones thereby play a central role in transcription regulation, DNA repair, DNA replication and chromosomal stability. DNA accessibility is regulated via a complex set of post-translational modifications of histones, also called histone code, and nucleosome remodeling. This chain is Histone H4, found in Medicago sativa (Alfalfa).